Consider the following 447-residue polypeptide: Na(+)-translocating NADH-quinone reductase subunit A (447 aa).

Belongs to the NqrA family. Composed of six subunits; NqrA, NqrB, NqrC, NqrD, NqrE and NqrF.

It catalyses the reaction a ubiquinone + n Na(+)(in) + NADH + H(+) = a ubiquinol + n Na(+)(out) + NAD(+). Its function is as follows. NQR complex catalyzes the reduction of ubiquinone-1 to ubiquinol by two successive reactions, coupled with the transport of Na(+) ions from the cytoplasm to the periplasm. NqrA to NqrE are probably involved in the second step, the conversion of ubisemiquinone to ubiquinol. The polypeptide is Na(+)-translocating NADH-quinone reductase subunit A (Neisseria meningitidis serogroup A / serotype 4A (strain DSM 15465 / Z2491)).